Here is a 479-residue protein sequence, read N- to C-terminus: Sulfate adenylyltransferase subunit 1 (479 aa).

Residues 25–239 (KSLLRFLTCG…EVLETVDIQR (215 aa)) enclose the tr-type G domain. The segment at 34 to 41 (GSVDDGKS) is G1. 34–41 (GSVDDGKS) is a binding site for GTP. The G2 stretch occupies residues 92–96 (GITID). Positions 113–116 (DTPG) are G3. Residues 113–117 (DTPGH) and 168–171 (NKMD) each bind GTP. Residues 168-171 (NKMD) are G4. The segment at 206-208 (SAL) is G5.

The protein belongs to the TRAFAC class translation factor GTPase superfamily. Classic translation factor GTPase family. CysN/NodQ subfamily. In terms of assembly, heterodimer composed of CysD, the smaller subunit, and CysN.

The catalysed reaction is sulfate + ATP + H(+) = adenosine 5'-phosphosulfate + diphosphate. It functions in the pathway sulfur metabolism; hydrogen sulfide biosynthesis; sulfite from sulfate: step 1/3. Its function is as follows. With CysD forms the ATP sulfurylase (ATPS) that catalyzes the adenylation of sulfate producing adenosine 5'-phosphosulfate (APS) and diphosphate, the first enzymatic step in sulfur assimilation pathway. APS synthesis involves the formation of a high-energy phosphoric-sulfuric acid anhydride bond driven by GTP hydrolysis by CysN coupled to ATP hydrolysis by CysD. This is Sulfate adenylyltransferase subunit 1 from Salmonella agona (strain SL483).